A 276-amino-acid polypeptide reads, in one-letter code: Large ribosomal subunit protein uL2cy (276 aa).

Disordered stretches follow at residues 1–25 (MAIH…VKSN) and 225–276 (MNPV…RRSK). Polar residues predominate over residues 7–25 (KTSTPSTRNGTVDSQVKSN).

This sequence belongs to the universal ribosomal protein uL2 family. Part of the 50S ribosomal subunit.

It is found in the plastid. The protein resides in the chloroplast. This chain is Large ribosomal subunit protein uL2cy (rpl2-B), found in Coffea arabica (Arabian coffee).